The chain runs to 234 residues: MFDTKALQAEQRQRASEISLHDGIDNQSVRFIAGADVGFEQHGEITRAAIAILRYPSLALVEYQVARVATSLPYIPGLLSFREYPALLAAWAQLQQRPDLILVDGQGIAHPRRLGVASHFGLLVDVPTIGVAKSRLCGDFLPLHQDVGAVQPLFDNDEQLGWVWRSKIRCNPLFISPGHRVSVGSALAWVQRCMAGYRLPEPTRWADAIASNRPQFQRWLRKNPDFLGKRRDMI.

Mg(2+) contacts are provided by Asp36 and Asp104.

Belongs to the endonuclease V family. Mg(2+) is required as a cofactor.

The protein resides in the cytoplasm. It carries out the reaction Endonucleolytic cleavage at apurinic or apyrimidinic sites to products with a 5'-phosphate.. Functionally, DNA repair enzyme involved in the repair of deaminated bases. Selectively cleaves double-stranded DNA at the second phosphodiester bond 3' to a deoxyinosine leaving behind the intact lesion on the nicked DNA. This chain is Endonuclease V, found in Yersinia pestis.